The chain runs to 142 residues: Serine/threonine-protein kinase BtrW (142 aa).

The protein belongs to the anti-sigma-factor family. In terms of assembly, probably able to multimerize; interacts with BtrV.

The catalysed reaction is L-seryl-[protein] + ATP = O-phospho-L-seryl-[protein] + ADP + H(+). It carries out the reaction L-threonyl-[protein] + ATP = O-phospho-L-threonyl-[protein] + ADP + H(+). Functionally, possible negative regulator of sigma-B activity. Phosphorylates and inactivates its specific antagonist protein, BtrV. Upon phosphorylation of BtrV, BtrW is released and binds to an unknown partner(s) that might be sigma-B, thereby blocking its ability to form a complex with its partner (possibly an RNA polymerase holoenzyme (E-sigma-B)). Involved in type III secretion system (T3SS). Phosphorylates BtrV. The protein is Serine/threonine-protein kinase BtrW (btrW) of Bordetella bronchiseptica (strain ATCC BAA-588 / NCTC 13252 / RB50) (Alcaligenes bronchisepticus).